The following is a 953-amino-acid chain: Coatomer subunit beta (953 aa).

An N-acetylthreonine modification is found at T2. 6 HEAT repeats span residues 96–131 (HEMILVCDAYRKDLQHPNEFIRGSTLRFLCKLKEAE), 132–168 (LLEPLMPAIRACLEHRHSYVRRNAVLAIYTIYRNFEN), 240–276 (SERARFIRCIYNLLQSSSPAVKYEAAGTLVTLSSAPT), 277–314 (AIKAAAQCYIDLIIKESDNNVKLIVLDRLVELKEHPAH), 316–353 (RVLQDLVMDILRVLSTPDLEVRKKTLQLALDLVSSRNV), and 396–433 (DMAANVIPVLMEFLSDSNEAAAADVLEFVREAIQRFDN). An N6-acetyllysine modification is found at K494.

In terms of assembly, oligomeric complex that consists of at least the alpha, beta, beta', gamma, delta, epsilon and zeta subunits. Interacts with SCYL1. Interacts with CAPN8. Interacts with COPG1. Interacts with ARF1 (myristoylated); this interaction is required for binding of COPB1 to Golgi membranes. Interacts (via trunk domain) with ARF1 (via switch I region); the interaction is direct. Interacts with KCNK2 (via N-terminus); this interaction increases the channel-mediated whole cell currents and promotes plasma membrane expression of KCNK2. Interacts with PRKCE. Interacts with STX17. Interacts with TMEM115. Interacts with TMEM41B. In terms of processing, proteolytically cleaved between Ser-528 and Ser-529 by CAPN8.

Its subcellular location is the cytoplasm. The protein resides in the golgi apparatus membrane. It is found in the cytoplasmic vesicle. It localises to the COPI-coated vesicle membrane. The protein localises to the cell membrane. Its subcellular location is the endoplasmic reticulum-Golgi intermediate compartment. The protein resides in the microsome membrane. In terms of biological role, the coatomer is a cytosolic protein complex that binds to dilysine motifs and reversibly associates with Golgi non-clathrin-coated vesicles, which further mediate biosynthetic protein transport from the ER, via the Golgi up to the trans Golgi network. Coatomer complex is required for budding from Golgi membranes, and is essential for the retrograde Golgi-to-ER transport of dilysine-tagged proteins. In mammals, the coatomer can only be recruited by membranes associated to ADP-ribosylation factors (ARFs), which are small GTP-binding proteins; the complex also influences the Golgi structural integrity, as well as the processing, activity, and endocytic recycling of LDL receptors. Involved in the Golgi disassembly and reassembly processes during cell cycle. Involved in autophagy by playing a role in early endosome function. Plays a role in organellar compartmentalization of secretory compartments including endoplasmic reticulum (ER)-Golgi intermediate compartment (ERGIC), Golgi, trans-Golgi network (TGN) and recycling endosomes, and in biosynthetic transport of CAV1. Plays a functional role in facilitating the transport of kappa-type opioid receptor mRNAs into axons and enhances translation of these proteins in the axonal compartment of dorsal root ganglion (DRG) cells. Required for limiting lipid storage in lipid droplets. Involved in lipid homeostasis by regulating the presence of perilipin family members PLIN2 and PLIN3 at the lipid droplet surface and promoting the association of adipocyte triglyceride lipase (PNPLA2) with the lipid droplet surface to mediate lipolysis. In Rattus norvegicus (Rat), this protein is Coatomer subunit beta (Copb1).